The primary structure comprises 91 residues: Sec-independent protein translocase protein TatA (91 aa).

Residues methionine 1–glycine 21 traverse the membrane as a helical segment. The segment at alanine 42–valine 91 is disordered. Residues glutamate 51–glutamine 65 show a composition bias toward low complexity. Residues glutamine 78–valine 91 are compositionally biased toward basic and acidic residues.

Belongs to the TatA/E family. As to quaternary structure, the Tat system comprises two distinct complexes: a TatABC complex, containing multiple copies of TatA, TatB and TatC subunits, and a separate TatA complex, containing only TatA subunits. Substrates initially bind to the TatABC complex, which probably triggers association of the separate TatA complex to form the active translocon.

The protein resides in the cell inner membrane. Functionally, part of the twin-arginine translocation (Tat) system that transports large folded proteins containing a characteristic twin-arginine motif in their signal peptide across membranes. TatA could form the protein-conducting channel of the Tat system. The sequence is that of Sec-independent protein translocase protein TatA from Pseudomonas savastanoi pv. phaseolicola (strain 1448A / Race 6) (Pseudomonas syringae pv. phaseolicola (strain 1448A / Race 6)).